We begin with the raw amino-acid sequence, 347 residues long: Doublecortin domain-containing protein 2C (347 aa).

Doublecortin domains are found at residues 16–98 (KTIL…LDYI) and 136–217 (RYIN…IPYW). Positions 235–260 (KYTQTKKRVESKVKEPLQNDSVPPRS) are disordered. The span at 241-251 (KRVESKVKEPL) shows a compositional bias: basic and acidic residues.

It is found in the cell projection. It localises to the cilium. Its subcellular location is the flagellum. The protein localises to the cytoplasm. This Mus musculus (Mouse) protein is Doublecortin domain-containing protein 2C.